The following is a 257-amino-acid chain: Snake venom serine protease CL5 (257 aa).

The first 18 residues, 1–18 (MVLIRVLANLLILQLSYA), serve as a signal peptide directing secretion. The propeptide occupies 19–24 (QRSSEL). The region spanning 25–248 (VIGGDECNIN…HLDWIQSIIA (224 aa)) is the Peptidase S1 domain. 5 disulfide bridges follow: Cys31-Cys162, Cys49-Cys65, Cys141-Cys209, Cys173-Cys188, and Cys199-Cys224. Catalysis depends on His64, which acts as the Charge relay system. N-linked (GlcNAc...) asparagine glycosylation is found at Asn78 and Asn102. Catalysis depends on Asp109, which acts as the Charge relay system. Residues Asn153 and Asn169 are each glycosylated (N-linked (GlcNAc...) asparagine). Ser203 acts as the Charge relay system in catalysis. Asn250 carries N-linked (GlcNAc...) asparagine glycosylation.

It belongs to the peptidase S1 family. Snake venom subfamily. As to quaternary structure, monomer. As to expression, expressed by the venom gland.

The protein localises to the secreted. Its function is as follows. Snake venom serine protease that may act in the hemostasis system of the prey. This Trimeresurus stejnegeri (Chinese green tree viper) protein is Snake venom serine protease CL5.